Reading from the N-terminus, the 138-residue chain is Cellular retinoic acid-binding protein 2 (138 aa).

A Nuclear localization signal motif is present at residues 21 to 31 (KVLGVNVMLRK). Lys-102 participates in a covalent cross-link: Glycyl lysine isopeptide (Lys-Gly) (interchain with G-Cter in SUMO). 133–135 (RVY) contributes to the all-trans-retinoate binding site.

This sequence belongs to the calycin superfamily. Fatty-acid binding protein (FABP) family. In terms of assembly, interacts with importin alpha, RXR and RARA. Post-translationally, sumoylated in response to retinoic acid binding, sumoylation is critical for dissociation from ER and subsequent nuclear translocation.

Its subcellular location is the cytoplasm. It localises to the endoplasmic reticulum. It is found in the nucleus. Its function is as follows. Transports retinoic acid to the nucleus. Regulates the access of retinoic acid to the nuclear retinoic acid receptors. In Bos taurus (Bovine), this protein is Cellular retinoic acid-binding protein 2 (CRABP2).